Here is a 274-residue protein sequence, read N- to C-terminus: Diaminopimelate epimerase (274 aa).

Positions 11, 44, and 64 each coordinate substrate. Residue cysteine 73 is the Proton donor of the active site. Substrate is bound by residues 74–75, asparagine 157, asparagine 190, and 208–209; these read GN and ER. Cysteine 217 acts as the Proton acceptor in catalysis. 218 to 219 is a binding site for substrate; sequence GS.

The protein belongs to the diaminopimelate epimerase family. In terms of assembly, homodimer.

Its subcellular location is the cytoplasm. The enzyme catalyses (2S,6S)-2,6-diaminopimelate = meso-2,6-diaminopimelate. It participates in amino-acid biosynthesis; L-lysine biosynthesis via DAP pathway; DL-2,6-diaminopimelate from LL-2,6-diaminopimelate: step 1/1. Functionally, catalyzes the stereoinversion of LL-2,6-diaminopimelate (L,L-DAP) to meso-diaminopimelate (meso-DAP), a precursor of L-lysine and an essential component of the bacterial peptidoglycan. The polypeptide is Diaminopimelate epimerase (Yersinia pseudotuberculosis serotype O:1b (strain IP 31758)).